The sequence spans 134 residues: S-adenosylmethionine decarboxylase proenzyme (134 aa).

Residue Ser64 is the Schiff-base intermediate with substrate; via pyruvic acid of the active site. A Pyruvic acid (Ser); by autocatalysis modification is found at Ser64. Catalysis depends on His69, which acts as the Proton acceptor; for processing activity. Catalysis depends on Cys84, which acts as the Proton donor; for catalytic activity.

The protein belongs to the prokaryotic AdoMetDC family. Type 1 subfamily. As to quaternary structure, heterotetramer of two alpha and two beta chains arranged as a dimer of alpha/beta heterodimers. Pyruvate is required as a cofactor. Post-translationally, is synthesized initially as an inactive proenzyme. Formation of the active enzyme involves a self-maturation process in which the active site pyruvoyl group is generated from an internal serine residue via an autocatalytic post-translational modification. Two non-identical subunits are generated from the proenzyme in this reaction, and the pyruvate is formed at the N-terminus of the alpha chain, which is derived from the carboxyl end of the proenzyme. The post-translation cleavage follows an unusual pathway, termed non-hydrolytic serinolysis, in which the side chain hydroxyl group of the serine supplies its oxygen atom to form the C-terminus of the beta chain, while the remainder of the serine residue undergoes an oxidative deamination to produce ammonia and the pyruvoyl group blocking the N-terminus of the alpha chain.

The catalysed reaction is S-adenosyl-L-methionine + H(+) = S-adenosyl 3-(methylsulfanyl)propylamine + CO2. The protein operates within amine and polyamine biosynthesis; S-adenosylmethioninamine biosynthesis; S-adenosylmethioninamine from S-adenosyl-L-methionine: step 1/1. Functionally, catalyzes the decarboxylation of S-adenosylmethionine to S-adenosylmethioninamine (dcAdoMet), the propylamine donor required for the synthesis of the polyamines spermine and spermidine from the diamine putrescine. The polypeptide is S-adenosylmethionine decarboxylase proenzyme (Hydrogenobaculum sp. (strain Y04AAS1)).